Reading from the N-terminus, the 707-residue chain is Transcription termination factor Rho (707 aa).

2 disordered regions span residues 1–38 (MSDT…RRGT) and 76–321 (QAAG…DEIQ). Low complexity-rich tracts occupy residues 16-31 (AAAP…TGAG) and 76-93 (QAAG…ADTA). Residues 107 to 132 (RTGDEAPAEKAEKAGKADKKADKAAA) show a composition bias toward basic and acidic residues. Over residues 153 to 163 (ASAEQAAPADD) the composition is skewed to low complexity. The segment covering 176–188 (DAGSPSATDTTVA) has biased composition (polar residues). A compositionally biased stretch (low complexity) spans 203 to 213 (QQSQGHQQGQG). Positions 215 to 265 (ARSDAEGGDGRRRDRRDRGDRDRGDRGDRGDRGDRGDRGERGRDRRNKGDD) are enriched in basic and acidic residues. Residues 301-315 (RRGRRGRYRDRRGRR) are compositionally biased toward basic residues. The 76-residue stretch at 331-406 (LIPVAGILDI…VRLDSVNGMA (76 aa)) folds into the Rho RNA-BD domain. Residues 449–454 (GKGQRG), 461–466 (KTGKTM), and Arg492 each bind ATP.

This sequence belongs to the Rho family. In terms of assembly, homohexamer. The homohexamer assembles into an open ring structure.

In terms of biological role, facilitates transcription termination by a mechanism that involves Rho binding to the nascent RNA, activation of Rho's RNA-dependent ATPase activity, and release of the mRNA from the DNA template. In Streptomyces lividans, this protein is Transcription termination factor Rho.